Consider the following 113-residue polypeptide: U11-theraphotoxin-Hhn1f (113 aa).

The N-terminal stretch at 1–21 (MNTVRVTFLLVFVLAVSLGQA) is a signal peptide. The propeptide occupies 22–74 (DKDENRMEMQEKTEQGKSYLDFAENLLLQKLEELEAKLLEEDSEESRNSRQKR). The segment at 61-83 (EEDSEESRNSRQKRCIGEGVPCD) is disordered. Intrachain disulfides connect Cys75/Cys90, Cys82/Cys95, and Cys89/Cys110.

The protein belongs to the neurotoxin 14 (magi-1) family. 01 (HNTX-16) subfamily. In terms of tissue distribution, expressed by the venom gland.

It localises to the secreted. Probable ion channel inhibitor. The sequence is that of U11-theraphotoxin-Hhn1f from Cyriopagopus hainanus (Chinese bird spider).